Consider the following 91-residue polypeptide: C-C motif chemokine 5 (91 aa).

Positions 1-23 are cleaved as a signal peptide; sequence MKVSAATFAILLATATFRAPASA. 2 disulfides stabilise this stretch: C33-C57 and C34-C73.

Belongs to the intercrine beta (chemokine CC) family.

It is found in the secreted. Chemoattractant for blood monocytes, memory T-helper cells and eosinophils. Causes the release of histamine from basophils and activates eosinophils. May activate several chemokine receptors including CCR1, CCR3, CCR4 and CCR5. May also be an agonist of the G protein-coupled receptor GPR75. Together with GPR75, may play a role in neuron survival through activation of a downstream signaling pathway involving the PI3, Akt and MAP kinases. By activating GPR75 may also play a role in insulin secretion by islet cells. This chain is C-C motif chemokine 5 (CCL5), found in Canis lupus familiaris (Dog).